We begin with the raw amino-acid sequence, 150 residues long: Deoxyuridine 5'-triphosphate nucleotidohydrolase (150 aa).

Substrate-binding positions include 69–71, N82, 86–88, and K96; these read RSG and LID.

This sequence belongs to the dUTPase family. The cofactor is Mg(2+).

It carries out the reaction dUTP + H2O = dUMP + diphosphate + H(+). It participates in pyrimidine metabolism; dUMP biosynthesis; dUMP from dCTP (dUTP route): step 2/2. In terms of biological role, this enzyme is involved in nucleotide metabolism: it produces dUMP, the immediate precursor of thymidine nucleotides and it decreases the intracellular concentration of dUTP so that uracil cannot be incorporated into DNA. The polypeptide is Deoxyuridine 5'-triphosphate nucleotidohydrolase (Neisseria gonorrhoeae (strain ATCC 700825 / FA 1090)).